Consider the following 338-residue polypeptide: Protein SGT1 homolog (338 aa).

The residue at position 2 (Ala2) is an N-acetylalanine. TPR repeat units lie at residues 11 to 45, 46 to 79, and 80 to 113; these read AASR…KPDD, APYY…NPNS, and STAL…NSAD. Residues 142–231 enclose the CS domain; it reads QSKIKYDWYQ…PEAVRWEKLE (90 aa). The region spanning 249 to 338 is the SGS domain; the sequence is LYPSSSHYTR…PPDDMEWKKY (90 aa). Ser254 is modified (phosphoserine). Thr257 is subject to Phosphothreonine. Lys268 participates in a covalent cross-link: Glycyl lysine isopeptide (Lys-Gly) (interchain with G-Cter in SUMO1); alternate. Residue Lys268 forms a Glycyl lysine isopeptide (Lys-Gly) (interchain with G-Cter in SUMO2); alternate linkage. Ser304 carries the post-translational modification Phosphoserine.

It belongs to the SGT1 family. As to quaternary structure, probably associates with SCF (SKP1-CUL1-F-box protein) complex through interaction with SKP1. Interacts with S100A6. Interacts with HSP90. Phosphorylated at Ser-254 and Ser-304, dephosphorylation promotes nuclear translocation, most likely due to disruption of the SUGT1-HSP90 complex.

The protein resides in the cytoplasm. The protein localises to the nucleus. Functionally, may play a role in ubiquitination and subsequent proteasomal degradation of target proteins. The sequence is that of Protein SGT1 homolog from Bos taurus (Bovine).